The following is a 170-amino-acid chain: Alpha-crystallin A chain (170 aa).

An N-acetylmethionine modification is found at Met1. The segment at 1-63 (MDVTIQHPWF…RTALDSGISE (63 aa)) is required for complex formation with BFSP1 and BFSP2. Position 6 is a deamidated glutamine; partial (Gln6). At Ser45 the chain carries Phosphoserine. Gln50 carries the post-translational modification Deamidated glutamine; partial. The region spanning 52 to 161 (LFRTALDSGI…GERTIPVSRE (110 aa)) is the sHSP domain. At Lys99 the chain carries N6-acetyllysine. His100 contributes to the Zn(2+) binding site. The residue at position 101 (Asn101) is a Deamidated asparagine; partial. Positions 102, 107, and 151 each coordinate Zn(2+). Positions 144-170 (PKLVDPSHGERTIPVSREEKPSSAPSS) are disordered. Basic and acidic residues predominate over residues 148-164 (DPSHGERTIPVSREEKP). Ser159 carries O-linked (GlcNAc) serine glycosylation.

This sequence belongs to the small heat shock protein (HSP20) family. In terms of assembly, heteromer composed of three CRYAA and one CRYAB subunits. Inter-subunit bridging via zinc ions enhances stability, which is crucial as there is no protein turn over in the lens. Can also form homodimers and homotetramers (dimers of dimers) which serve as the building blocks of homooligomers. Within homooligomers, the zinc-binding motif is created from residues of 3 different molecules. His-100 and Glu-102 from one molecule are ligands of the zinc ion, and His-107 and His-151 residues from additional molecules complete the site with tetrahedral coordination geometry. Part of a complex required for lens intermediate filament formation composed of BFSP1, BFSP2 and CRYAA. In terms of processing, acetylation at Lys-99 may increase chaperone activity. Post-translationally, undergoes age-dependent proteolytical cleavage at the C-terminus.

The protein resides in the cytoplasm. It is found in the nucleus. Its function is as follows. Contributes to the transparency and refractive index of the lens. Acts as a chaperone, preventing aggregation of various proteins under a wide range of stress conditions. Required for the correct formation of lens intermediate filaments as part of a complex composed of BFSP1, BFSP2 and CRYAA. The chain is Alpha-crystallin A chain (CRYAA) from Tamandua mexicana (Northern Tamandua).